The following is a 181-amino-acid chain: Small ribosomal subunit protein bS16 (181 aa).

Residues Lys150–Glu181 are disordered. The span at Lys158–Glu181 shows a compositional bias: low complexity.

Belongs to the bacterial ribosomal protein bS16 family.

The sequence is that of Small ribosomal subunit protein bS16 from Bacteroides fragilis (strain ATCC 25285 / DSM 2151 / CCUG 4856 / JCM 11019 / LMG 10263 / NCTC 9343 / Onslow / VPI 2553 / EN-2).